The following is a 346-amino-acid chain: [LysW]-lysine/[LysW]-ornithine hydrolase (346 aa).

His68 contacts Zn(2+). Asp70 is an active-site residue. Residue Asp92 participates in Zn(2+) binding. Residue Glu122 is the Proton acceptor of the active site. 3 residues coordinate Zn(2+): Glu123, Glu146, and His317.

It belongs to the peptidase M20A family. LysK subfamily. Zn(2+) serves as cofactor. Co(2+) is required as a cofactor.

Its subcellular location is the cytoplasm. The enzyme catalyses [amino-group carrier protein]-C-terminal-gamma-(L-lysyl)-L-glutamate + H2O = [amino-group carrier protein]-C-terminal-L-glutamate + L-lysine. It carries out the reaction [amino-group carrier protein]-C-terminal-gamma-(L-ornithyl)-L-glutamate + H2O = [amino-group carrier protein]-C-terminal-L-glutamate + L-ornithine. It participates in amino-acid biosynthesis; L-lysine biosynthesis via AAA pathway; L-lysine from L-alpha-aminoadipate (Thermus route): step 5/5. The protein operates within amino-acid biosynthesis; L-arginine biosynthesis. Catalyzes the release of L-lysine from [LysW]-gamma-L-lysine and the release of L-ornithine from [LysW]-L-ornithine. The polypeptide is [LysW]-lysine/[LysW]-ornithine hydrolase (Saccharolobus islandicus (strain M.16.4 / Kamchatka #3) (Sulfolobus islandicus)).